The chain runs to 353 residues: Phosphate acyltransferase (353 aa).

It belongs to the PlsX family. In terms of assembly, homodimer. Probably interacts with PlsY.

The protein resides in the cytoplasm. It catalyses the reaction a fatty acyl-[ACP] + phosphate = an acyl phosphate + holo-[ACP]. It functions in the pathway lipid metabolism; phospholipid metabolism. Catalyzes the reversible formation of acyl-phosphate (acyl-PO(4)) from acyl-[acyl-carrier-protein] (acyl-ACP). This enzyme utilizes acyl-ACP as fatty acyl donor, but not acyl-CoA. In Rhodopseudomonas palustris (strain BisB5), this protein is Phosphate acyltransferase.